Here is a 374-residue protein sequence, read N- to C-terminus: MGNQTSKKSQETSAKSVHYTTELRSYAAACKADTELQSFDTCLQARTSHVISTLATGVEVRALSFDSLKEVTQCLLEMNQEVVKVILDCKKDIWKNQEMFELVEDYFENSLKTLDFCAALEKGLRRARDSHLLILVALQQFEDESLVQGGNGYKKTLEELKNFKDAESPFNEDFFKMFQSVYKQQMLMLEKLQHRKNKLDKKLKCIHTWRKLSSIIFVATFATVLICSVVAAAMAAPPVAAALAAATAVPLGSMGKWIDSLWKNYENALKGQKEVISSMQAGTFVAVKDLDNIRVLIERLEIEITGMVKSAEFAVEHNAVKIGIDDIKKKLEVFKKNVEELGTQADLCSRDIRRARTVILQRIIKHPNNASSST.

The next 2 membrane-spanning stretches (helical) occupy residues 215 to 235 and 238 to 258; these read IIFV…AAMA and PVAA…GKWI.

It belongs to the UPF0496 family.

It is found in the membrane. This is UPF0496 protein At4g34320 from Arabidopsis thaliana (Mouse-ear cress).